A 460-amino-acid polypeptide reads, in one-letter code: Sorting nexin-4 (460 aa).

Residues 1–16 (MTATEQQQDDFSNVSW) are compositionally biased toward polar residues. The tract at residues 1–53 (MTATEQQQDDFSNVSWSEHVHDQQTRSVPDAEEPGHDMNAPGTGLERDAPSLG) is disordered. Residues 56 to 178 (KLECTVDTPI…TFLESPDWNA (123 aa)) enclose the PX domain. Coiled-coil stretches lie at residues 238 to 266 (EKVI…QKLI), 306 to 337 (RDMQ…EYLN), and 374 to 403 (QARR…TSDM).

Belongs to the sorting nexin family. Forms a complex with ATG20 and ATG17.

It is found in the cytoplasm. The protein localises to the membrane. It localises to the endosome membrane. Sorting nexin involved in the separation or division of vacuoles throughout the entire life cycle of the cells. Involved in retrieval of late-Golgi SNAREs from post-Golgi endosomes to the trans-Golgi network, for cytoplasm to vacuole transport (Cvt), and autophagy of large cargos including mitophagy, pexophagy and glycophagy. Autophagy is required for proper vegetative growth, asexual/sexual reproduction, and full virulence. Autophagy is particularly involved in the biosynthesis of deoxynivalenol (DON), an important virulence determinant. The protein is Sorting nexin-4 of Gibberella zeae (strain ATCC MYA-4620 / CBS 123657 / FGSC 9075 / NRRL 31084 / PH-1) (Wheat head blight fungus).